A 398-amino-acid polypeptide reads, in one-letter code: Phosphoglycerate kinase (398 aa).

Residues 23–25, arginine 38, 61–64, arginine 122, and arginine 155 contribute to the substrate site; these read DFN and HMGK. Residues lysine 206, glycine 297, glutamate 328, and 354-357 contribute to the ATP site; that span reads GGDS.

It belongs to the phosphoglycerate kinase family. In terms of assembly, monomer.

It localises to the cytoplasm. It carries out the reaction (2R)-3-phosphoglycerate + ATP = (2R)-3-phospho-glyceroyl phosphate + ADP. It functions in the pathway carbohydrate degradation; glycolysis; pyruvate from D-glyceraldehyde 3-phosphate: step 2/5. The chain is Phosphoglycerate kinase from Clostridium botulinum (strain Kyoto / Type A2).